The primary structure comprises 552 residues: 4-coumarate--CoA ligase-like 3 (552 aa).

Residues S207, S208, G209, T210, T211, and K215 each contribute to the ATP site. F252 provides a ligand contact to (E)-4-coumaroyl-AMP. R273 is a CoA binding site. The interval G275–Q346 is SBD1. (E)-4-coumaroyl-AMP-binding residues include G324, Q346, G347, and T351. Residues Q346, G347, T351, D432, and R447 each coordinate ATP. The segment at G347–Y411 is SBD2. Positions 449 and 453 each coordinate (E)-4-coumaroyl-AMP. 2 residues coordinate CoA: K455 and G456. Position 538 (K538) interacts with ATP. The Microbody targeting signal signature appears at S550–L552.

This sequence belongs to the ATP-dependent AMP-binding enzyme family. Requires Mg(2+) as cofactor.

It is found in the peroxisome. It carries out the reaction (E)-4-coumarate + ATP + CoA = (E)-4-coumaroyl-CoA + AMP + diphosphate. The catalysed reaction is (E)-4-coumarate + ATP + H(+) = (E)-4-coumaroyl-AMP + diphosphate. It catalyses the reaction (E)-4-coumaroyl-AMP + CoA = (E)-4-coumaroyl-CoA + AMP + H(+). Functionally, carboxylate--CoA ligase that may use 4-coumarate as substrate. Follows a two-step reaction mechanism, wherein the carboxylate substrate first undergoes adenylation by ATP, followed by a thioesterification in the presence of CoA to yield the final CoA thioester. The sequence is that of 4-coumarate--CoA ligase-like 3 from Arabidopsis thaliana (Mouse-ear cress).